We begin with the raw amino-acid sequence, 74 residues long: U2-sicaritoxin-Sdo1a (74 aa).

Positions 1–20 (MKLSFCFFLCAIVLFSFAEA) are cleaved as a signal peptide. Positions 21-39 (RINPNQLKRLRELVRDDEP) are excised as a propeptide. Cystine bridges form between Cys-42–Cys-59, Cys-49–Cys-62, and Cys-58–Cys-71.

In terms of tissue distribution, expressed by the venom gland.

It is found in the secreted. The sequence is that of U2-sicaritoxin-Sdo1a from Hexophthalma dolichocephala (Afrotropical spider).